A 418-amino-acid chain; its full sequence is Glutamyl-tRNA reductase (418 aa).

Residues 49–52, Ser109, 114–116, and Gln120 contribute to the substrate site; these read TCNR and EPQ. Catalysis depends on Cys50, which acts as the Nucleophile. 189-194 provides a ligand contact to NADP(+); sequence GAGETI.

Belongs to the glutamyl-tRNA reductase family. Homodimer.

The catalysed reaction is (S)-4-amino-5-oxopentanoate + tRNA(Glu) + NADP(+) = L-glutamyl-tRNA(Glu) + NADPH + H(+). It functions in the pathway porphyrin-containing compound metabolism; protoporphyrin-IX biosynthesis; 5-aminolevulinate from L-glutamyl-tRNA(Glu): step 1/2. Its function is as follows. Catalyzes the NADPH-dependent reduction of glutamyl-tRNA(Glu) to glutamate 1-semialdehyde (GSA). The sequence is that of Glutamyl-tRNA reductase from Escherichia coli O9:H4 (strain HS).